The following is a 947-amino-acid chain: Netrin receptor unc-5 (947 aa).

Residues 43 to 141 enclose the Ig-like domain; it reads VIRNKPLRLQ…VHLAYMRKHF (99 aa). Cystine bridges form between C53-C112, C160-C209, C243-C295, C247-C299, and C273-C285. Residues 139 to 226 form the Ig-like C2-type domain; sequence KHFLKSPVAQ…SRKTDPVEVQ (88 aa). A glycan (N-linked (GlcNAc...) asparagine) is linked at N206. TSP type-1 domains are found at residues 230–300 and 302–354; these read DGGW…VPCK and DGGW…QLCT. 2 C-linked (Man) tryptophan glycosylation sites follow: W305 and W308. The chain crosses the membrane as a helical span at residues 369 to 389; the sequence is GSVASIFIVASFILAILAMFC. The Cytoplasmic portion of the chain corresponds to 390–947; it reads CKRGNSKKSK…LSAFPQIVSP (558 aa). Residue Y510 is modified to Phosphotyrosine. Positions 530 to 658 constitute a ZU5 domain; it reads NIVAAQIDSN…LNTNMFVQFE (129 aa). A Death domain is found at 857 to 938; that stretch reads ELARLLDMPN…DAVMVLERFL (82 aa).

This sequence belongs to the unc-5 family. Interacts (via cytoplasmic domain) with src-1 (via SH2 domain and SH3 domain). Interacts with madd-4. Interacts with unc-129; the interaction is direct. In terms of processing, phosphorylated on different cytoplasmic tyrosine residues. May be phosphorylated on tyrosine residues by src-1. Tyrosine phosphorylation is unc-6-dependent. Glycosylated via C-mannosylation by dpy-19 at Trp-305 and Trp-308. Expressed in cell bodies and axons of the VNC motor neurons that extend axons to the dorsal midline and within the ventral nerve cord. Expressed in gonadal distal tip cells (DTC).

It localises to the cell membrane. Its subcellular location is the membrane raft. The protein localises to the cell projection. The protein resides in the neuron projection. In terms of biological role, receptor for netrin (unc-6) required for axon guidance. Mediates axon repulsion of neuronal growth cones in the developing nervous system upon ligand binding. Axon migration is mediated by the secreted unc-6, which promotes attraction of neurons and axons through binding to the unc-40 receptor, while repulsion requires both unc-5 and unc-40 receptors. Involved in the ventral-dorsal and anterior-posterior migration of distal tip cells along the body, which may be mediated by Wnt receptor mom-5, ced-10/Rac, ced-12/ELMO and mig-2/RhoG. This is Netrin receptor unc-5 from Caenorhabditis elegans.